The sequence spans 1712 residues: Latent-transforming growth factor beta-binding protein 1 (1712 aa).

Residues 1 to 23 form the signal peptide; it reads MAGAWLRWGLLLWAGLLAWSAHG. Positions 65 to 118 are disordered; it reads TAASSRALAGPPAERTRRTSQPGGAALPGLRSPLPPEPARPGGPSRQLHSKAGA. The region spanning 181-213 is the EGF-like 1 domain; it reads TKPSCVPPCQNGGMCLRPQLCVCKPGSKGKACE. Intrachain disulfides connect Cys185–Cys195, Cys189–Cys201, and Cys203–Cys212. 2 N-linked (GlcNAc...) asparagine glycosylation sites follow: Asn339 and Asn370. The 33-residue stretch at 391-423 folds into the EGF-like 2 domain; it reads RVVICHLPCMNGGQCSSRDKCQCPPNFTGKLCQ. 6 cysteine pairs are disulfide-bonded: Cys395–Cys405, Cys399–Cys411, Cys413–Cys422, Cys551–Cys573, Cys560–Cys586, and Cys574–Cys589. A glycan (N-linked (GlcNAc...) asparagine) is linked at Asn416. A TB 1 domain is found at 549–601; it reads GRCFQETIGSQCGKALPGLSKQEDCCGTVGTSWGFNKCQKCPKKQSYHGYTQM. Asn612 carries N-linked (GlcNAc...) asparagine glycosylation. Residues 618–658 enclose the EGF-like 3; calcium-binding domain; that stretch reads DINECQLQGVCPNGECLNTMGSYRCSCKMGFGPDPTFSSCV. Intrachain disulfides connect Cys622–Cys633, Cys628–Cys642, Cys644–Cys657, Cys671–Cys694, Cys681–Cys706, Cys695–Cys709, and Cys696–Cys721. A glycan (O-linked (Glc) serine) is linked at Ser639. In terms of domain architecture, TB 2 spans 669-721; that stretch reads GPCYRLVSPGRHCMHPLSVHLTKQICCCSVGKAWGPHCEKCPLPGTAAFKEIC. The disordered stretch occupies residues 753–799; it reads NTQPVAKSTHPPPLPAKEEPVEALTSSWEHGPRGAEPEVVTAPPEKE. Thr761 and Thr793 each carry an O-linked (GalNAc...) threonine glycan. Positions 865-906 constitute an EGF-like 4; calcium-binding domain; that stretch reads EINECTVNPDICGAGHCINLPVRYTCICYEGYKFSEQLRKCV. 37 disulfide bridges follow: Cys869/Cys881, Cys876/Cys890, Cys892/Cys905, Cys911/Cys923, Cys918/Cys932, Cys934/Cys947, Cys953/Cys964, Cys959/Cys973, Cys976/Cys988, Cys994/Cys1005, Cys1000/Cys1014, Cys1017/Cys1028, Cys1034/Cys1045, Cys1040/Cys1054, Cys1056/Cys1069, Cys1075/Cys1086, Cys1081/Cys1095, Cys1097/Cys1110, Cys1116/Cys1127, Cys1122/Cys1136, Cys1138/Cys1151, Cys1157/Cys1169, Cys1164/Cys1178, Cys1180/Cys1192, Cys1198/Cys1210, Cys1204/Cys1219, Cys1221/Cys1234, Cys1240/Cys1252, Cys1246/Cys1261, Cys1263/Cys1276, Cys1282/Cys1294, Cys1289/Cys1303, Cys1305/Cys1319, Cys1340/Cys1363, Cys1350/Cys1375, Cys1364/Cys1380, and Cys1365/Cys1392. The EGF-like 5; calcium-binding domain occupies 907–948; that stretch reads DIDECAQVRHLCSQGRCENTEGSFLCVCPAGFMASEEGTNCI. O-linked (Glc) serine glycosylation is present at Ser929. The EGF-like 6; calcium-binding domain occupies 949 to 989; it reads DVDECLRPDMCRDGRCINTAGAFRCEYCDSGYRMSRRGYCE. Asn966 carries the post-translational modification (3R)-3-hydroxyasparagine. An EGF-like 7; calcium-binding domain is found at 990–1029; the sequence is DIDECLKPSTCPEEQCVNTPGSYQCVPCTEGFRGWNGQCL. A glycan (O-linked (Glc) serine) is linked at Ser1011. Residues 1030–1070 form the EGF-like 8; calcium-binding domain; that stretch reads DVDECLQPKVCTNGSCTNLEGSYMCSCHRGYSPTPDHRHCQ. N-linked (GlcNAc...) asparagine glycosylation is present at Asn1042. A glycan (O-linked (Glc) serine) is linked at Ser1051. Positions 1071-1111 constitute an EGF-like 9; calcium-binding domain; it reads DIDECQQGNLCMNGQCRNTDGSFRCTCGQGYQLSAAKDQCE. The region spanning 1112–1152 is the EGF-like 10; calcium-binding domain; sequence DIDECEHHHLCSHGQCRNTEGSFQCVCNQGYRASVLGDHCE. Asn1129 carries the post-translational modification (3R)-3-hydroxyasparagine. O-linked (Glc) serine glycosylation is present at Ser1133. An EGF-like 11; calcium-binding domain is found at 1153–1193; that stretch reads DINECLEDSSVCQGGDCINTAGSYDCTCPDGFQLNDNKGCQ. An EGF-like 12; calcium-binding domain is found at 1194 to 1235; sequence DINECAQPGLCGSHGECLNTQGSFHCVCEQGFSISADGRTCE. Ser1216 carries O-linked (Glc) serine glycosylation. Residues 1236–1277 form the EGF-like 13; calcium-binding domain; it reads DIDECVNNTVCDSHGFCDNTAGSFRCLCYQGFQAPQDGQGCV. The N-linked (GlcNAc...) asparagine glycan is linked to Asn1242. The 43-residue stretch at 1278–1320 folds into the EGF-like 14; calcium-binding domain; it reads DVNECELLSGVCGEAFCENVEGSFLCVCADENQEYSPMTGQCR. Residues 1335 to 1402 are 8-Cys3 region; the sequence is EEKKECYYNL…PRGKGLVPAG (68 aa). Residues 1338–1392 enclose the TB 3 domain; the sequence is KECYYNLNDASLCDNVLAPNVTKQECCCTSGAGWGDNCEIFPCPVQGTAEFTEMC. N-linked (GlcNAc...) asparagine glycosylation occurs at Asn1357. Residue Ser1405 is modified to Phosphoserine. An EGF-like 15; calcium-binding domain is found at 1415-1457; the sequence is DADECLLFGEEICKNGYCLNTQPGYECYCKQGTYYDPVKLQCF. Disulfide bonds link Cys1419–Cys1432, Cys1427–Cys1441, Cys1443–Cys1456, Cys1462–Cys1473, Cys1468–Cys1482, Cys1484–Cys1497, Cys1517–Cys1541, Cys1527–Cys1553, Cys1542–Cys1556, and Cys1543–Cys1568. The EGF-like 16; calcium-binding domain maps to 1458–1498; sequence DMDECQDPNSCIDGQCVNTEGSYNCFCTHPMVLDASEKRCV. An O-linked (Glc) serine glycan is attached at Ser1479. The tract at residues 1498–1712 is C-terminal domain; the sequence is VQPTESNEQI…LNLDKESDLE (215 aa). Positions 1515-1568 constitute a TB 4 domain; the sequence is DLCWEHLSEEYVCSRPLVGKQTTYTECCCLYGEAWGMQCALCPMKDSDDYAQLC. Residues Ser1588 and Ser1607 each carry the phosphoserine modification. Residues 1612–1652 enclose the EGF-like 17 domain; it reads QAEECGILNGCENGRCVRVQEGYTCDCFDGYHLDMAKMTCV. Disulfide bonds link Cys1616-Cys1627, Cys1622-Cys1636, Cys1638-Cys1651, Cys1657-Cys1672, Cys1667-Cys1681, and Cys1683-Cys1696. In terms of domain architecture, EGF-like 18; calcium-binding spans 1653–1697; the sequence is DVNECSELNNRMSLCKNAKCINTEGSYKCLCLPGYIPSDKPNYCT. Ser1678 carries O-linked (Glc) serine glycosylation.

Belongs to the LTBP family. In terms of assembly, interacts with TGFB1; associates via disulfide bonds with the Latency-associated peptide chain (LAP) regulatory chain of TGFB1, leading to regulate activation of TGF-beta-1. LTBP1 does not bind directly to TGF-beta-1, the active chain of TGFB1. Interacts (via C-terminal domain) with FBN1 (via N-terminal domain). Interacts with FBN2. Interacts with ADAMTSL2. Interacts with EFEMP2. Post-translationally, contains hydroxylated asparagine residues. Two intrachain disulfide bonds from the TB3 domain are rearranged upon TGFB1 binding, and form interchain bonds with TGFB1 propeptide, anchoring it to the extracellular matrix. In terms of processing, O-glycosylated on serine residues by POGLUT2 and POGLUT3.

The protein localises to the secreted. Its subcellular location is the extracellular space. It localises to the extracellular matrix. Key regulator of transforming growth factor beta (TGFB1, TGFB2 and TGFB3) that controls TGF-beta activation by maintaining it in a latent state during storage in extracellular space. Associates specifically via disulfide bonds with the Latency-associated peptide (LAP), which is the regulatory chain of TGF-beta, and regulates integrin-dependent activation of TGF-beta. Outcompeted by LRRC32/GARP for binding to LAP regulatory chain of TGF-beta. This is Latent-transforming growth factor beta-binding protein 1 from Mus musculus (Mouse).